Consider the following 248-residue polypeptide: 2,3-bisphosphoglycerate-dependent phosphoglycerate mutase (248 aa).

Residues 10 to 17, 23 to 24, Arg62, 89 to 92, Lys100, 116 to 117, and 183 to 184 contribute to the substrate site; these read RHGQSEWN, TG, ERHY, RR, and GN. Residue His11 is the Tele-phosphohistidine intermediate of the active site. The active-site Proton donor/acceptor is Glu89.

Belongs to the phosphoglycerate mutase family. BPG-dependent PGAM subfamily.

It carries out the reaction (2R)-2-phosphoglycerate = (2R)-3-phosphoglycerate. The protein operates within carbohydrate degradation; glycolysis; pyruvate from D-glyceraldehyde 3-phosphate: step 3/5. Catalyzes the interconversion of 2-phosphoglycerate and 3-phosphoglycerate. The polypeptide is 2,3-bisphosphoglycerate-dependent phosphoglycerate mutase (Corynebacterium diphtheriae (strain ATCC 700971 / NCTC 13129 / Biotype gravis)).